The primary structure comprises 629 residues: Chaperone protein DnaK (629 aa).

Residues 576-587 show a composition bias toward low complexity; sequence QAYQQQQDAQAG. The tract at residues 576 to 629 is disordered; the sequence is QAYQQQQDAQAGAAGGAGGMGGMGGMADGPGGAADADGDDEEYVDADFEDVDEE. A compositionally biased stretch (gly residues) spans 588-607; that stretch reads AAGGAGGMGGMGGMADGPGG. The segment covering 611–629 has biased composition (acidic residues); that stretch reads ADGDDEEYVDADFEDVDEE.

The protein belongs to the heat shock protein 70 family.

In terms of biological role, acts as a chaperone. In Halobacterium salinarum (strain ATCC 29341 / DSM 671 / R1), this protein is Chaperone protein DnaK.